Reading from the N-terminus, the 161-residue chain is Decarboxylase (161 aa).

In terms of domain architecture, EthD spans 29–131 (QGMSEEAYRK…VGDHENFADT (103 aa)).

Belongs to the tpcK family.

It carries out the reaction atrochrysone carboxylate + H(+) = atrochrysone + CO2. It functions in the pathway secondary metabolite biosynthesis. Decarboxylase; part of the gene cluster that mediates the biosynthesis of monodictyphenone, a prenyl xanthone derivative. The pathway begins with the synthesis of atrochrysone thioester by the polyketide synthase (PKS) mdpG. The atrochrysone carboxyl ACP thioesterase mdpF then breaks the thioester bond and releases the atrochrysone carboxylic acid from mdpG. The atrochrysone carboxylic acid is then converted to atrochrysone which is further transformed into emodin anthrone by mdpH-1 and mdpH-2. Emodin is further modified to yield monodictyphenone via several steps involving mdpB, mdpC mdpJ, mdpK and mdpL. These enzymes with xptA, xptB and xptC are also proposed to be involved in the synthesis of shamixanthone from emodin. Especially, direct reduction of emodin by the short chain dehydrogenase mdpC followed by dehydration catalyzed by the scytalone dehydratase-like protein mdpB gives loss of oxygen and formation of chrysophanol intermediate in two simple steps. In Emericella nidulans (strain FGSC A4 / ATCC 38163 / CBS 112.46 / NRRL 194 / M139) (Aspergillus nidulans), this protein is Decarboxylase.